The following is a 151-amino-acid chain: MNKTPLPNLETLEQKWYVIDAADQRLGRLATEIAMILRGKNKATFTPHLDTGDFVIVINAEKVTVTGKKRQQKVYRRDSGRPGGMKVESFDKLQKRIPERIIEHAVKGMLPKNSLGRKLFTKLKVYAGAEHPHQAQQPEVLAINTIPAGGN.

Belongs to the universal ribosomal protein uL13 family. In terms of assembly, part of the 50S ribosomal subunit.

In terms of biological role, this protein is one of the early assembly proteins of the 50S ribosomal subunit, although it is not seen to bind rRNA by itself. It is important during the early stages of 50S assembly. The sequence is that of Large ribosomal subunit protein uL13 from Microcystis aeruginosa (strain NIES-843 / IAM M-2473).